Reading from the N-terminus, the 706-residue chain is Mitochondrial intermediate peptidase, mitochondrial (706 aa).

The N-terminal 29 residues, 1–29 (MWKLTRRLQPHINSTRWLVRNFRNGGAGD), are a transit peptide targeting the mitochondrion. The segment at 212–238 (NPTYRSTSGGSRGSTRSAHKSKQKGFR) is disordered. A compositionally biased stretch (low complexity) spans 214 to 227 (TYRSTSGGSRGSTR). Position 491 (His-491) interacts with Zn(2+). Glu-492 is a catalytic residue. Positions 495 and 520 each coordinate Zn(2+).

Belongs to the peptidase M3 family. It depends on Zn(2+) as a cofactor.

The protein localises to the mitochondrion. Aminopeptidase which cleaves preproteins, imported into the mitochondrion, to their mature size. Could cleave both preproteins and preprotein intermediates already cleaved by the mitochondrial processing peptidase (MPP). This is Mitochondrial intermediate peptidase, mitochondrial from Arabidopsis thaliana (Mouse-ear cress).